The primary structure comprises 334 residues: Zinc finger Ran-binding domain-containing protein 2 (334 aa).

2 consecutive RanBP2-type zinc fingers follow at residues 9–40 (SDGDWICPDKKCGNVNFARRTSCNRCGREKTT) and 65–94 (SANDWQCKTCGNVNWARRSECNMCNTPKYA). A disordered region spans residues 117-334 (REESDGEYDE…SGSRTSSKKK (218 aa)). A compositionally biased stretch (acidic residues) spans 150-163 (DKESEGEDEEDEDG). The span at 196 to 212 (KKKKSNRRSRSKSRSSH) shows a compositional bias: basic residues. 2 stretches are compositionally biased toward low complexity: residues 213-224 (SRSSSRSSSHSS) and 258-285 (SRSSSRSYRGSSTPRKRSYSSSRSSSSP). The segment covering 302-318 (RKKRRSRSRSPERRRRS) has biased composition (basic residues). Residues 319–334 (SSGSSHSGSRTSSKKK) are compositionally biased toward low complexity.

It belongs to the ZRANB2 family.

It localises to the nucleus. Its function is as follows. May regulate alternative splicing by interfering with constitutive 5'-splice site selection. The chain is Zinc finger Ran-binding domain-containing protein 2 from Gallus gallus (Chicken).